Reading from the N-terminus, the 168-residue chain is Thermonuclease (168 aa).

Positions 1–27 are cleaved as a signal peptide; the sequence is MKKITTGVLILAIAIVVLIFQYINGDG. Residues R64, E72, and R114 contribute to the active site.

The protein belongs to the thermonuclease family. Ca(2+) is required as a cofactor.

Its subcellular location is the secreted. The enzyme catalyses Endonucleolytic cleavage to nucleoside 3'-phosphates and 3'-phosphooligonucleotide end-products.. Its function is as follows. Enzyme that catalyzes the hydrolysis of both DNA and RNA at the 5'-position of the phosphodiester bond. The sequence is that of Thermonuclease (nucI) from Staphylococcus intermedius.